The chain runs to 510 residues: Putative thymidine phosphorylase (510 aa).

It belongs to the thymidine/pyrimidine-nucleoside phosphorylase family. Type 2 subfamily.

The enzyme catalyses thymidine + phosphate = 2-deoxy-alpha-D-ribose 1-phosphate + thymine. In Nitrobacter hamburgensis (strain DSM 10229 / NCIMB 13809 / X14), this protein is Putative thymidine phosphorylase.